A 469-amino-acid chain; its full sequence is Glutamine synthetase (469 aa).

The 85-residue stretch at 13 to 97 (HEVKFVDLRF…IRCDILEPGT (85 aa)) folds into the GS beta-grasp domain. Residues 105–469 (PRSIAKRAED…PVEFELYYSV (365 aa)) enclose the GS catalytic domain. Mg(2+) contacts are provided by Glu130 and Glu132. Residue Glu208 participates in ATP binding. Positions 213 and 221 each coordinate Mg(2+). L-glutamate contacts are provided by residues 265-266 (NG) and Gly266. His270 contacts Mg(2+). ATP contacts are provided by residues 272-274 (HMS) and Ser274. Residues Arg322, Glu328, and Arg340 each contribute to the L-glutamate site. Positions 340, 345, and 353 each coordinate ATP. Residue Glu358 coordinates Mg(2+). Residue Arg360 participates in L-glutamate binding. O-AMP-tyrosine is present on Tyr398.

Belongs to the glutamine synthetase family. Oligomer of 12 subunits arranged in the form of two hexameric ring. The cofactor is Mg(2+).

It is found in the cytoplasm. It carries out the reaction L-glutamate + NH4(+) + ATP = L-glutamine + ADP + phosphate + H(+). With respect to regulation, the activity of this enzyme could be controlled by adenylation under conditions of abundant glutamine. Catalyzes the ATP-dependent biosynthesis of glutamine from glutamate and ammonia. This chain is Glutamine synthetase, found in Escherichia coli O157:H7.